We begin with the raw amino-acid sequence, 2562 residues long: Zinc finger homeobox protein 2 (2562 aa).

Residues 1–13 (MATLNSASPSGTV) are compositionally biased toward polar residues. Disordered stretches follow at residues 1 to 88 (MATL…PPKD) and 337 to 410 (PSPP…DPPP). Residues 56–73 (GGERLESGSDLDPPKEIG) are compositionally biased toward basic and acidic residues. 2 C2H2-type zinc fingers span residues 446-469 (LKCPKCNWHYKYQQTLDVHMREKH) and 501-525 (YRCDVCNYSTTTKGNLSIHMQSDKH). Disordered regions lie at residues 530 to 559 (QGFQAGPGGQASPPEASLPPTSVGDKEPKT), 603 to 651 (PPGL…PDKP), and 669 to 705 (RKFPTAAPGSLSPETHLPPSQLLGSSSDGLPTSPSPD). A compositionally biased stretch (pro residues) spans 609 to 622 (PGPPPPPGAAPTNP). Residues 690 to 704 (LLGSSSDGLPTSPSP) show a composition bias toward polar residues. C2H2-type zinc fingers lie at residues 752–776 (HRCKLCCYGTQLKANFQLHLKTDKH), 815–839 (LRCNICDFESNSKEKMQLHTRGSAH), and 864–888 (YHCLLCAWDTPSRLALLQHLRTPAH). A disordered region spans residues 923 to 966 (RLQTPGKASDTPLAQPPTSEKDAQNKTEQQASEVTEDRSGPPRD). The segment at 1003–1026 (YRCPLCQEQLVGRPALHFHLSHLH) adopts a C2H2-type 6 zinc-finger fold. Disordered regions lie at residues 1058-1126 (NPVE…PAPR) and 1140-1166 (MSEEEEGAMGEPRSAEPTPADSRHPLT). Pro residues-rich tracts occupy residues 1091–1101 (SPDPPLEPPLA) and 1114–1124 (DQPPSPAPSPA). C2H2-type zinc fingers lie at residues 1185-1211 (YKCTVCKESFTQKNILLVHYNSVSHLH) and 1242-1266 (FKCTVCRVSYNQSSTLEIHMRSVLH). Residues 1278–1305 (RAEGAERGQEEFKEGETEGEAGTEKKGP) show a composition bias toward basic and acidic residues. The tract at residues 1278-1313 (RAEGAERGQEEFKEGETEGEAGTEKKGPDPGGFMSG) is disordered. Residues 1474–1497 (LACGACGKLFSNMLILKTHEEHVH) form a C2H2-type 9 zinc finger. The disordered stretch occupies residues 1520–1584 (LYPPPVEPPK…EGSRGSLPPA (65 aa)). Over residues 1521-1531 (YPPPVEPPKPP) the composition is skewed to pro residues. Positions 1589–1648 (RRFSRTKFTEFQTQALQSFFETSAYPKDGEVERLASLLGLASRVVVVWFQNARQKARKNA) form a DNA-binding region, homeobox 1. The C2H2-type 10; degenerate zinc finger occupies 1664–1687 (SGCRRCHATFACVFELVRHLKKCY). The disordered stretch occupies residues 1689-1760 (DQPPEEEEEA…EGKAPPSPPV (72 aa)). The segment covering 1690–1713 (QPPEEEEEAERGEEEEEVEEEEAE) has biased composition (acidic residues). Basic and acidic residues predominate over residues 1743 to 1752 (TRPESKESEG). The C2H2-type 11 zinc finger occupies 1761–1783 (YACDQCAASFPSQDLLTTHHRLH). 7 disordered regions span residues 1814–1853 (SGTSSVTGTPLKRKHDDGSLSPTGSEAGGGGEGEPPKDKR), 1907–1934 (RKGQFRSTPGGVAGPAVKPTVPPSPAPF), 1971–2057 (PLPF…DSMG), 2114–2136 (KKAKLQGTAPPGSGGSSEGTSAA), 2186–2210 (PAPETPLAPKGPPATTPASSVPLGA), 2263–2313 (QTAG…PNSS), and 2391–2429 (LQQPPQAPEPTATAPPKPPELPASGEGESSEADELLTGS). Positions 1851–1910 (DKRLRTTILPEQLEILYRWYMQDSNPTRKMLDCISEEVGLKKRVVQVWFQNTRARERKGQ) form a DNA-binding region, homeobox 2. A compositionally biased stretch (pro residues) spans 1985–1996 (TPEPPPPLPPPA). Positions 2008–2037 (KASPESEACSPSAGDLSDSSASSLAEPESP) are enriched in low complexity. The segment covering 2038 to 2051 (GAGGTSGGPGGGTG) has biased composition (gly residues). A DNA-binding region (homeobox 3) is located at residues 2058 to 2117 (QRRYRTQMSSLQLKIMKACYEAYRTPTMQECEVLGEEIGLPKRVIQVWFQNARAKEKKAK). The span at 2188 to 2200 (PETPLAPKGPPAT) shows a compositional bias: pro residues. Residues 2275-2286 (PVSNQTNSSTDP) are compositionally biased toward polar residues. A compositionally biased stretch (basic and acidic residues) spans 2295 to 2305 (SGDKVSGERKP). The segment covering 2395–2411 (PQAPEPTATAPPKPPEL) has biased composition (pro residues). The C2H2-type 12; degenerate zinc-finger motif lies at 2441–2461 (YLCRQCKMAFDGEAPATAHQR). Residues 2485 to 2509 (YHCLACEVLLSGREALASHLRSSAH) form a C2H2-type 13 zinc finger. Disordered stretches follow at residues 2506-2525 (SSAHRRKAAPPPGGPPITVT) and 2540-2562 (EEARLPHTDPNPKTTTTSTLLAL). Over residues 2553-2562 (TTTTSTLLAL) the composition is skewed to low complexity.

In terms of tissue distribution, expressed in brain (at protein level). Expressed at the highest levels in the pyramidal cell layer of the hippocampus, the suprachiasmatic nucleus, laterodorsal thalamic nucleus, lateral geniculate nucleus, substantia nigra pars compacta, and magnocellular part of the red nucleus (at protein level). Highly expressed in dorsal root ganglia. Expressed at lower levels in kidney, stomach, liver, heart and testis.

Its subcellular location is the nucleus. Transcriptional regulator that is critical for the regulation of pain perception and processing of noxious stimuli. This Mus musculus (Mouse) protein is Zinc finger homeobox protein 2.